Consider the following 89-residue polypeptide: MANHKSAEKRIRQTIKRTERNRFYKTKVKNIIKAVREAVAINDVAKAQERLKIANKELHKFVSKGILKKNTASRKVSRLNASVKKIALA.

The protein belongs to the bacterial ribosomal protein bS20 family.

Binds directly to 16S ribosomal RNA. This chain is Small ribosomal subunit protein bS20, found in Helicobacter pylori (strain P12).